We begin with the raw amino-acid sequence, 122 residues long: Large ribosomal subunit protein uL14c (122 aa).

Belongs to the universal ribosomal protein uL14 family. Part of the 50S ribosomal subunit.

The protein resides in the plastid. The protein localises to the chloroplast. In terms of biological role, binds to 23S rRNA. This chain is Large ribosomal subunit protein uL14c, found in Chlorokybus atmophyticus (Soil alga).